The sequence spans 238 residues: Ubiquinone biosynthesis O-methyltransferase (238 aa).

The S-adenosyl-L-methionine site is built by Arg40, Gly59, Asp81, and Met126.

The protein belongs to the methyltransferase superfamily. UbiG/COQ3 family.

The catalysed reaction is a 3-demethylubiquinol + S-adenosyl-L-methionine = a ubiquinol + S-adenosyl-L-homocysteine + H(+). The enzyme catalyses a 3-(all-trans-polyprenyl)benzene-1,2-diol + S-adenosyl-L-methionine = a 2-methoxy-6-(all-trans-polyprenyl)phenol + S-adenosyl-L-homocysteine + H(+). The protein operates within cofactor biosynthesis; ubiquinone biosynthesis. In terms of biological role, O-methyltransferase that catalyzes the 2 O-methylation steps in the ubiquinone biosynthetic pathway. In Neisseria meningitidis serogroup C (strain 053442), this protein is Ubiquinone biosynthesis O-methyltransferase.